The primary structure comprises 351 residues: Histidine protein kinase SaeS (351 aa).

The next 2 helical transmembrane spans lie at I9–I29 and T40–I60. The region spanning N61–N114 is the HAMP domain. In terms of domain architecture, Histidine kinase spans N129–D348. A Phosphohistidine; by autocatalysis modification is found at H132.

Post-translationally, autophosphorylated.

It localises to the cell membrane. The enzyme catalyses ATP + protein L-histidine = ADP + protein N-phospho-L-histidine.. In terms of biological role, member of the two-component regulatory system SaeR/SaeS involved in the regulation of staphylococcal virulence factors in a strain-dependent fashion. Probably functions as a membrane-associated protein kinase that upon sensing the appropriate signal, autophosphorylates and in turn activates the cytosolic response regulator SaeR. The chain is Histidine protein kinase SaeS (saeS) from Staphylococcus aureus (strain bovine RF122 / ET3-1).